The sequence spans 454 residues: MTVIIASHWGPQSKQMLPPEPPRIILREVPVQNNQKEHPPVQEIKTVSSKSKEHRVSSSRKIPDHFDVGPRFYMNVPADGSEVFEDDEKDVENECWAVIERIGSEDDKFEASELVEYRDHDWYIALAINKEKTPDKANYQHLLYSYRGGIQRIILTPQQTDSIDKTPLVKYKIIGDGLYEVLPIHSSLPQTGLISPKYRYNKGVELRIFGIVNWIDFVLDDDHQTHRTMVWTDAVGPIYLSAADRANIRRKLLLTEMQIFAPLRMCHITVKAEFNFSIPDGSPIQWTISSFQPLIEESEKDPNIGRNLWPARVLRFDDLVVTKKTPNGYWLKSQRLEGHVNVFAGANQIGIIESAGEKYATKGSMMAFVVPCYQNSTFAYFEALIAGPPRVVMIITEGRFLNYCPKTWPPSVRKMRDQYQKEHVLKSEVRSSPICMKQPDYCLKSLRGFSECPF.

A disordered region spans residues 31-61; the sequence is VQNNQKEHPPVQEIKTVSSKSKEHRVSSSRK. Over residues 50–61 the composition is skewed to basic and acidic residues; it reads KSKEHRVSSSRK.

In terms of assembly, may interact with pid-4, pid-5, app-1 and prmt-5. As to expression, expressed throughout the mitotic and meiotic regions of the germline and in oocytes.

The protein localises to the cytoplasm. It localises to the perinuclear region. The protein resides in the cytoplasmic granule. Its function is as follows. Involved in gene silencing mediated by a class of 21 nucleotide PIWI-interacting RNAs (piRNAs) that possess a uracil residue at the 5'-end (also called 21U-RNAs) and that guide the Piwi protein prg-1 to its DNA targets for silencing. Not required for the biogenesis of 21U-RNAs. May also be involved in gene silencing mediated by 22G-siRNAs (a class of 22 nucleotide endogenous small interfering RNAs (siRNAs) that possess a triphosphorylated guanine residue at the 5'-end) and 26G-siRNAs (a class of 26 nucleotide siRNAs that possess a guanine residue at the 5'-end). Required for the biogenesis of secondary and tertiary 22G-siRNAs from many loci. Specifically, promotes the production of 22G-siRNAs from the 5' end of target mRNAs. May play a role in the production of 26G-siRNAs. Plays a role in small RNA-directed transgenerational epigenetic inheritance (also called RNAe) over several generations and germline immortality. Together with the argonaut protein hrde-1, promotes the silencing of the DNA transposable element Tc1. Required for the formation of liquid-like condensates in the cytoplasm called Z granules, playing a role in maintaining their assembly, viscosity and morphology in adult germ cells, and localization in early embryos. The sequence is that of Protein pid-2 from Caenorhabditis elegans.